A 559-amino-acid polypeptide reads, in one-letter code: O-fucosyltransferase 37 (559 aa).

The chain crosses the membrane as a helical; Signal-anchor for type II membrane protein span at residues 53-73 (FFLLLISLSLVFSGISFLTFS). N126 carries N-linked (GlcNAc...) asparagine glycosylation. Residue 331-333 (HLR) participates in substrate binding. Residues N372, N403, N447, and N504 are each glycosylated (N-linked (GlcNAc...) asparagine).

It belongs to the glycosyltransferase GT106 family.

It localises to the membrane. It participates in glycan metabolism. The protein is O-fucosyltransferase 37 of Arabidopsis thaliana (Mouse-ear cress).